The sequence spans 183 residues: Ribosome-recycling factor (183 aa).

This sequence belongs to the RRF family.

It localises to the cytoplasm. Functionally, responsible for the release of ribosomes from messenger RNA at the termination of protein biosynthesis. May increase the efficiency of translation by recycling ribosomes from one round of translation to another. This chain is Ribosome-recycling factor, found in Mycoplasmoides gallisepticum (strain R(low / passage 15 / clone 2)) (Mycoplasma gallisepticum).